The following is a 247-amino-acid chain: MATRLQYDNNNCEIGVFSKLTNAYCLVSATSASANFFTGYESKLKGVIPIVTTSIGGSGTIGSLCVGNKNGLLLSHTITDQELQHLRDSLPDEVVVQRIEEPICALGNAIACNDYVALVHPKLEKDTEEIISDVLGVEVYRQTIANNELVGSYCSLSNNGGMVHSNTNVEEMVELANLVQVPLVAGTVNRGSQVISAGLTVNDWTAFCGSDTTAVELSVVNNIFKLVQSQPDFVGSEMRKSLIDTYV.

It belongs to the eIF-6 family. In terms of assembly, monomer. Associates with the 60S ribosomal subunit.

Its subcellular location is the cytoplasm. The protein localises to the nucleus. The protein resides in the nucleolus. Binds to the 60S ribosomal subunit and prevents its association with the 40S ribosomal subunit to form the 80S initiation complex in the cytoplasm. May also be involved in ribosome biogenesis. This is Eukaryotic translation initiation factor 6-1 from Arabidopsis thaliana (Mouse-ear cress).